We begin with the raw amino-acid sequence, 303 residues long: MINRERLTHLKQLEAESIHILREVVAEFANPVMMYSVGKDSSVMLHLAMKAFAPSKLPFPLLHVDTKWKFKEMIEFRDQRAKDLGFDLVVYSNPEGEKMNISPFEHGSKVHTDVMKTQGLKQALNAGGYDAVIGGARRDEEKSRAKERIFSFRDKHHRWDPKNQRPELWNIYNTAIQKGESVRVFPISNWTELDVWQYIYLEGIPIPSLYFAKEREVVEYEGTKIMVDDDRMPETLRSTAQKEMVRFRTLGCYPLTGAINSSATTLPEIIKEMLLSTSSEREGRLIDKDQEGAMELKKIEGYF.

Belongs to the PAPS reductase family. CysD subfamily. In terms of assembly, heterodimer composed of CysD, the smaller subunit, and CysN.

It catalyses the reaction sulfate + ATP + H(+) = adenosine 5'-phosphosulfate + diphosphate. Its pathway is sulfur metabolism; hydrogen sulfide biosynthesis; sulfite from sulfate: step 1/3. In terms of biological role, with CysN forms the ATP sulfurylase (ATPS) that catalyzes the adenylation of sulfate producing adenosine 5'-phosphosulfate (APS) and diphosphate, the first enzymatic step in sulfur assimilation pathway. APS synthesis involves the formation of a high-energy phosphoric-sulfuric acid anhydride bond driven by GTP hydrolysis by CysN coupled to ATP hydrolysis by CysD. The protein is Sulfate adenylyltransferase subunit 2 of Sulfurovum sp. (strain NBC37-1).